A 338-amino-acid chain; its full sequence is Ketol-acid reductoisomerase (NADP(+)) (338 aa).

A KARI N-terminal Rossmann domain is found at 1 to 181 (MKIYYDKDCN…GGGKAGIIET (181 aa)). Residues 24–27 (YGSQ), lysine 47, serine 50, serine 52, and 82–85 (DEIQ) each bind NADP(+). Histidine 107 is an active-site residue. Residue glycine 133 participates in NADP(+) binding. The region spanning 182–327 (SFKEETETDL…ARLRSMMAWI (146 aa)) is the KARI C-terminal knotted domain. Residues aspartate 190, glutamate 194, glutamate 226, and glutamate 230 each contribute to the Mg(2+) site. Serine 251 serves as a coordination point for substrate.

The protein belongs to the ketol-acid reductoisomerase family. The cofactor is Mg(2+).

The enzyme catalyses (2R)-2,3-dihydroxy-3-methylbutanoate + NADP(+) = (2S)-2-acetolactate + NADPH + H(+). It carries out the reaction (2R,3R)-2,3-dihydroxy-3-methylpentanoate + NADP(+) = (S)-2-ethyl-2-hydroxy-3-oxobutanoate + NADPH + H(+). The protein operates within amino-acid biosynthesis; L-isoleucine biosynthesis; L-isoleucine from 2-oxobutanoate: step 2/4. It functions in the pathway amino-acid biosynthesis; L-valine biosynthesis; L-valine from pyruvate: step 2/4. Its function is as follows. Involved in the biosynthesis of branched-chain amino acids (BCAA). Catalyzes an alkyl-migration followed by a ketol-acid reduction of (S)-2-acetolactate (S2AL) to yield (R)-2,3-dihydroxy-isovalerate. In the isomerase reaction, S2AL is rearranged via a Mg-dependent methyl migration to produce 3-hydroxy-3-methyl-2-ketobutyrate (HMKB). In the reductase reaction, this 2-ketoacid undergoes a metal-dependent reduction by NADPH to yield (R)-2,3-dihydroxy-isovalerate. The chain is Ketol-acid reductoisomerase (NADP(+)) from Geotalea uraniireducens (strain Rf4) (Geobacter uraniireducens).